The following is a 136-amino-acid chain: Secreted RxLR effector protein 15 (136 aa).

The first 22 residues, M1–A22, serve as a signal peptide directing secretion. Positions R47–R50 match the RxLR motif.

The protein belongs to the RxLR effector family.

The protein resides in the secreted. Its subcellular location is the host nucleus. It localises to the host cytoplasm. In terms of biological role, effector that completely suppresses the host cell death induced by cell death-inducing proteins. The protein is Secreted RxLR effector protein 15 of Plasmopara viticola (Downy mildew of grapevine).